The sequence spans 158 residues: NADPH-dependent 7-cyano-7-deazaguanine reductase (158 aa).

Residues 1 to 13 show a composition bias toward polar residues; that stretch reads MAKRSNTTMTSAG. Residues 1–37 form a disordered region; it reads MAKRSNTTMTSAGLQLGREVAPPDSPETAKLDRVPNP. Residues 27-37 are compositionally biased toward basic and acidic residues; it reads ETAKLDRVPNP. Cysteine 56 serves as the catalytic Thioimide intermediate. The active-site Proton donor is the aspartate 63. Residues 78–80 and 97–98 contribute to the substrate site; these read VES and HE.

Belongs to the GTP cyclohydrolase I family. QueF type 1 subfamily.

It localises to the cytoplasm. The enzyme catalyses 7-aminomethyl-7-carbaguanine + 2 NADP(+) = 7-cyano-7-deazaguanine + 2 NADPH + 3 H(+). It functions in the pathway tRNA modification; tRNA-queuosine biosynthesis. Functionally, catalyzes the NADPH-dependent reduction of 7-cyano-7-deazaguanine (preQ0) to 7-aminomethyl-7-deazaguanine (preQ1). This chain is NADPH-dependent 7-cyano-7-deazaguanine reductase, found in Bradyrhizobium sp. (strain ORS 278).